The sequence spans 378 residues: Cytochrome b (378 aa).

A run of 4 helical transmembrane segments spans residues 34–54, 78–99, 114–134, and 179–199; these read FGSL…FLAM, WLLR…YLHV, WLVG…GYVL, and FFTF…IHIL. The heme b site is built by H84 and H98. Positions 183 and 197 each coordinate heme b. H202 serves as a coordination point for a ubiquinone. 4 helical membrane-spanning segments follow: residues 227-247, 289-309, 321-341, and 348-368; these read FKDI…VLIN, LGGV…PFYH, INQI…WIGA, and YVLV…FNPL.

This sequence belongs to the cytochrome b family. The main subunits of complex b-c1 are: cytochrome b, cytochrome c1 and the Rieske protein. It depends on heme b as a cofactor.

It is found in the mitochondrion inner membrane. Component of the ubiquinol-cytochrome c reductase complex (complex III or cytochrome b-c1 complex) that is part of the mitochondrial respiratory chain. The b-c1 complex mediates electron transfer from ubiquinol to cytochrome c. Contributes to the generation of a proton gradient across the mitochondrial membrane that is then used for ATP synthesis. The sequence is that of Cytochrome b (MT-CYB) from Cochliomyia hominivorax (Primary screw-worm).